The sequence spans 142 residues: uncharacterized protein (142 aa).

The protein belongs to the GlcG family.

This is an uncharacterized protein from Citrobacter freundii.